Here is a 681-residue protein sequence, read N- to C-terminus: Sterile alpha motif domain-containing protein 11 (681 aa).

Disordered stretches follow at residues 41–77 (RNLK…EDGP), 212–234 (YHLG…HLPS), 251–307 (GPSG…APHV), and 407–498 (LLAL…GAEG). Lys72 participates in a covalent cross-link: Glycyl lysine isopeptide (Lys-Gly) (interchain with G-Cter in SUMO2). Residues 219–234 (HGEDPPWHDPPHHLPS) show a composition bias toward basic and acidic residues. The segment covering 412-423 (PQGPPGSGPPTP) has biased composition (pro residues). Thr485 bears the Phosphothreonine mark. In terms of domain architecture, SAM spans 543 to 608 (WTVDDVCSFV…AQVARRLGRV (66 aa)). The interval 625–681 (LRAPERELGTGEQPLSPTTATSPYGGGHALAGQTSPKQENGTLALLPGAPDPSQPLC) is disordered. 2 stretches are compositionally biased toward polar residues: residues 637–646 (QPLSPTTATS) and 656–665 (GQTSPKQENG). Ser640 bears the Phosphoserine mark.

Self-associates. Component of a Polycomb group (PcG) multiprotein PRC1-like complex. Interacts with SAMD7 and PHC2. As to expression, expressed in the outer and inner nuclear layers, ganglion cell layer and rod photoreceptors of the retina (at protein level). Widely expressed, showing the highest expression in kidney, prostate and retina.

The protein localises to the nucleus. Component of a Polycomb group (PcG) multiprotein PRC1-like complex, essential for establishing rod photoreceptor cell identity and function by silencing nonrod gene expression in developing rod photoreceptor cells. The protein is Sterile alpha motif domain-containing protein 11 (SAMD11) of Homo sapiens (Human).